A 404-amino-acid chain; its full sequence is Tryptophan synthase beta chain (404 aa).

Lysine 94 is subject to N6-(pyridoxal phosphate)lysine.

Belongs to the TrpB family. Tetramer of two alpha and two beta chains. Pyridoxal 5'-phosphate is required as a cofactor.

The catalysed reaction is (1S,2R)-1-C-(indol-3-yl)glycerol 3-phosphate + L-serine = D-glyceraldehyde 3-phosphate + L-tryptophan + H2O. Its pathway is amino-acid biosynthesis; L-tryptophan biosynthesis; L-tryptophan from chorismate: step 5/5. Functionally, the beta subunit is responsible for the synthesis of L-tryptophan from indole and L-serine. In Staphylococcus aureus (strain USA300), this protein is Tryptophan synthase beta chain.